The sequence spans 386 residues: Ferrochelatase (386 aa).

2 residues coordinate Fe cation: His196 and Glu277.

It belongs to the ferrochelatase family.

Its subcellular location is the cytoplasm. It carries out the reaction heme b + 2 H(+) = protoporphyrin IX + Fe(2+). The protein operates within porphyrin-containing compound metabolism; protoheme biosynthesis; protoheme from protoporphyrin-IX: step 1/1. Catalyzes the ferrous insertion into protoporphyrin IX. The chain is Ferrochelatase from Picosynechococcus sp. (strain ATCC 27264 / PCC 7002 / PR-6) (Agmenellum quadruplicatum).